The chain runs to 1087 residues: Fanconi-associated nuclease 1 homolog (1087 aa).

6 disordered regions span residues 1-79, 104-154, 169-202, 459-486, 816-835, and 842-871; these read MKSN…TPIK, FQKA…PNNL, EFLL…NNIT, TQNS…NNNI, ITSD…EKEN, and SVKK…EEEI. A compositionally biased stretch (low complexity) spans 41 to 79; sequence TTTPPKTPTQPIRFTQNNNKENDKSNNNNNNNNTITPIK. The span at 104–115 shows a compositional bias: polar residues; sequence FQKASTPSSPQI. Composition is skewed to low complexity over residues 118-154, 182-202, and 467-485; these read KLPQ…PNNL, NTTT…NNIT, and NNNN…NNNN. 2 coiled-coil regions span residues 419-490 and 830-874; these read WKSK…KEYD and KIEK…IIEI. Positions 848–871 are enriched in acidic residues; it reads EQEEEEEEEEEGQGQEEEEEEEEI. Residues E899, D1023, E1051, and V1052 each coordinate Mn(2+). In terms of domain architecture, VRR-NUC spans 961–1083; that stretch reads DDLLILLNQS…GCDVEVCLVK (123 aa).

Belongs to the FAN1 family. It depends on Mn(2+) as a cofactor. The cofactor is Mg(2+).

The enzyme catalyses Hydrolytically removes 5'-nucleotides successively from the 3'-hydroxy termini of 3'-hydroxy-terminated oligonucleotides.. Nuclease required for the repair of DNA interstrand cross-links (ICL). Acts as a 5'-3' exonuclease that anchors at a cut end of DNA and cleaves DNA successively at every third nucleotide, allowing to excise an ICL from one strand through flanking incisions. The chain is Fanconi-associated nuclease 1 homolog (mtmr15) from Dictyostelium discoideum (Social amoeba).